The primary structure comprises 285 residues: 4-diphosphocytidyl-2-C-methyl-D-erythritol kinase (285 aa).

Residue lysine 14 is part of the active site. 97–107 (PMGGGIGGGSS) lines the ATP pocket. The active site involves aspartate 139.

This sequence belongs to the GHMP kinase family. IspE subfamily.

It carries out the reaction 4-CDP-2-C-methyl-D-erythritol + ATP = 4-CDP-2-C-methyl-D-erythritol 2-phosphate + ADP + H(+). Its pathway is isoprenoid biosynthesis; isopentenyl diphosphate biosynthesis via DXP pathway; isopentenyl diphosphate from 1-deoxy-D-xylulose 5-phosphate: step 3/6. Catalyzes the phosphorylation of the position 2 hydroxy group of 4-diphosphocytidyl-2C-methyl-D-erythritol. The protein is 4-diphosphocytidyl-2-C-methyl-D-erythritol kinase of Tolumonas auensis (strain DSM 9187 / NBRC 110442 / TA 4).